The following is a 907-amino-acid chain: Protein translocase subunit SecA (907 aa).

ATP contacts are provided by residues Gln87, 105–109 (GEGKT), and Asp512. Residues Cys891, Cys893, Cys902, and His903 each contribute to the Zn(2+) site.

Belongs to the SecA family. In terms of assembly, monomer and homodimer. Part of the essential Sec protein translocation apparatus which comprises SecA, SecYEG and auxiliary proteins SecDF-YajC and YidC. Requires Zn(2+) as cofactor.

The protein resides in the cell inner membrane. It localises to the cytoplasm. It catalyses the reaction ATP + H2O + cellular proteinSide 1 = ADP + phosphate + cellular proteinSide 2.. In terms of biological role, part of the Sec protein translocase complex. Interacts with the SecYEG preprotein conducting channel. Has a central role in coupling the hydrolysis of ATP to the transfer of proteins into and across the cell membrane, serving both as a receptor for the preprotein-SecB complex and as an ATP-driven molecular motor driving the stepwise translocation of polypeptide chains across the membrane. This Tolumonas auensis (strain DSM 9187 / NBRC 110442 / TA 4) protein is Protein translocase subunit SecA.